The sequence spans 202 residues: Outer-membrane lipoprotein LolB (202 aa).

An N-terminal signal peptide occupies residues 1–24 (MESKEQHLIRQYFILAMFFLFLAG). Cys25 is lipidated: N-palmitoyl cysteine. Residue Cys25 is the site of S-diacylglycerol cysteine attachment.

This sequence belongs to the LolB family. Monomer.

Its subcellular location is the cell outer membrane. In terms of biological role, plays a critical role in the incorporation of lipoproteins in the outer membrane after they are released by the LolA protein. In Pseudoalteromonas translucida (strain TAC 125), this protein is Outer-membrane lipoprotein LolB.